Reading from the N-terminus, the 37-residue chain is MKVYSSVRKICKSCGLIRRHGKLFVRCINSKHNQRQN.

Belongs to the bacterial ribosomal protein bL36 family.

It localises to the plastid. In Euglena longa (Euglenophycean alga), this protein is Large ribosomal subunit protein bL36c (rpl36).